Consider the following 559-residue polypeptide: Formate--tetrahydrofolate ligase (559 aa).

Residue 68 to 75 (TPAGEGKT) participates in ATP binding.

It belongs to the formate--tetrahydrofolate ligase family.

It catalyses the reaction (6S)-5,6,7,8-tetrahydrofolate + formate + ATP = (6R)-10-formyltetrahydrofolate + ADP + phosphate. Its pathway is one-carbon metabolism; tetrahydrofolate interconversion. This is Formate--tetrahydrofolate ligase from Mesorhizobium japonicum (strain LMG 29417 / CECT 9101 / MAFF 303099) (Mesorhizobium loti (strain MAFF 303099)).